Consider the following 549-residue polypeptide: Cation/acetate symporter ActP (549 aa).

13 helical membrane-spanning segments follow: residues tryptophan 33–alanine 53, leucine 77–phenylalanine 97, glycine 103–glutamate 123, isoleucine 148–glycine 168, isoleucine 183–alanine 203, tryptophan 206–valine 226, isoleucine 262–leucine 282, glycine 303–valine 323, leucine 355–leucine 375, valine 404–glutamate 424, isoleucine 428–leucine 448, glycine 464–valine 484, and isoleucine 493–phenylalanine 513.

It belongs to the sodium:solute symporter (SSF) (TC 2.A.21) family.

It localises to the cell inner membrane. Transports acetate. This chain is Cation/acetate symporter ActP, found in Escherichia coli O6:K15:H31 (strain 536 / UPEC).